The primary structure comprises 272 residues: Centromere protein V-like protein 1 (272 aa).

A compositionally biased stretch (basic residues) spans 1-17 (MGRVRNRATAQRRRRKR). Disordered regions lie at residues 1 to 23 (MGRV…DPPA) and 65 to 95 (RRVR…KDLD). The segment covering 79 to 90 (APTPDPPGPAPS) has biased composition (pro residues). The region spanning 133-246 (HTGGCHCGAV…EEVGGGDPGE (114 aa)) is the CENP-V/GFA domain. Zn(2+)-binding residues include C137, C139, C157, C159, C162, C201, and C204. The disordered stretch occupies residues 240–272 (GGGDPGEEAAEEHKAIHKTSSQSAPACPREQEQ).

The protein belongs to the Gfa family. The cofactor is Zn(2+).

The protein is Centromere protein V-like protein 1 of Homo sapiens (Human).